The following is a 319-amino-acid chain: MKIGIVGLGRVGSSTAFALLMKGFAREMVLIDVDKKRAEGDALDLIHGTPFTRRANIYAGDYADLKGSDVVIVAAGVPQKPGETRLQLLGRNARVMKEIARNVSKYAPDSIVIVVTNPVDVLTYFFLKESGMDPRKVFGSGTVLDTARLRTLIAQHCGFSPRSVHVYVIGEHGDSEVPVWSGAMIGGIPLQNMCQICQKCDSKILENFAEKTKRAAYEIIERKGATHYAIALAVADIVESIFFDEKRVLTLSVYLEDYLGVKDLCISVPVTLGKHGVERILELNLNEEELEAFRKSASILKNAINEITAEENKHQNTSG.

NAD(+)-binding positions include 10–11 (RV), D32, R37, Y62, and 76–77 (GV). Substrate-binding positions include Q79, R85, and 117–120 (NPVD). NAD(+) is bound by residues 115 to 117 (VTN) and S140. Substrate is bound at residue 145–148 (DTAR). Beta-D-fructose 1,6-bisphosphate-binding residues include R150 and H165. H172 serves as the catalytic Proton acceptor. Y217 is subject to Phosphotyrosine. Residue T226 participates in substrate binding.

It belongs to the LDH/MDH superfamily. LDH family. Homotetramer.

The protein localises to the cytoplasm. The enzyme catalyses (S)-lactate + NAD(+) = pyruvate + NADH + H(+). It participates in fermentation; pyruvate fermentation to lactate; (S)-lactate from pyruvate: step 1/1. Allosterically activated by fructose 1,6-bisphosphate (FBP). Inactivated by Mn(2+), Co(2+), Cd(2+) and Zn(2+). In terms of biological role, catalyzes the conversion of lactate to pyruvate. It is stereospecific for L(+)-lactate. This chain is L-lactate dehydrogenase, found in Thermotoga maritima (strain ATCC 43589 / DSM 3109 / JCM 10099 / NBRC 100826 / MSB8).